Consider the following 213-residue polypeptide: UPF0319 protein HAPS_0727 (213 aa).

Residues 1-21 form the signal peptide; that stretch reads MKLGKIALAMTALIAGTTAFA.

This sequence belongs to the UPF0319 family.

The chain is UPF0319 protein HAPS_0727 from Glaesserella parasuis serovar 5 (strain SH0165) (Haemophilus parasuis).